Here is a 1264-residue protein sequence, read N- to C-terminus: Protein fantom (1264 aa).

4 coiled-coil regions span residues 64-143 (LKQH…LQVQ), 196-268 (YSNS…NVET), 299-454 (LRIS…ESDI), and 488-555 (NKDL…VHLL). C2 domains follow at residues 577 to 714 (KQYK…FCTT) and 773 to 897 (AATT…SGIF). Disordered stretches follow at residues 979–1018 (DTIS…YPSK) and 1047–1093 (QLAS…NTKQ). Positions 1056–1080 (SEDETEITEELEPEDEDRSASDSDD) are enriched in acidic residues.

The protein belongs to the RPGRIP1 family. In terms of assembly, interacts with NPHP4 and NPHP1; NPHP1, NPHP4 and RPGRIP1L are proposed to form a functional NPHP1-4-8 module localized to cell-cell contacts and the ciliary transition zone; NPHP4 mediates the interaction between NPHP1 and RPGRIP1L. Interacts with IQCB1; the interaction likely requires additional interactors. Interacts with TBXA2R (via C-terminus), RPGR, NEK4. Interacts with NPHP4, INVS and DVL2; proposed to form a complex involved in DVL2 stabilization. Interacts with PSMD2. In terms of tissue distribution, ubiquitously expressed. Not found in heart and skin.

The protein resides in the cytoplasm. It localises to the cytoskeleton. It is found in the cilium basal body. The protein localises to the cilium axoneme. Its subcellular location is the microtubule organizing center. The protein resides in the centrosome. It localises to the cell junction. It is found in the tight junction. Its function is as follows. Negatively regulates signaling through the G-protein coupled thromboxane A2 receptor (TBXA2R). May be involved in mechanisms like programmed cell death, craniofacial development, patterning of the limbs, and formation of the left-right axis. Involved in the organization of apical junctions; the function is proposed to implicate a NPHP1-4-8 module. Does not seem to be strictly required for ciliogenesis. Involved in establishment of planar cell polarity such as in cochlear sensory epithelium and is proposed to implicate stabilization of disheveled proteins. Involved in regulation of proteasomal activity at the primary cilium probably implicating association with PSDM2. In Mus musculus (Mouse), this protein is Protein fantom (Rpgrip1l).